The chain runs to 1447 residues: Bud site selection protein 4 (1447 aa).

A compositionally biased stretch (basic and acidic residues) spans 1–16; sequence MHDAESTVDSLLKEID. 2 disordered regions span residues 1 to 37 and 57 to 76; these read MHDAESTVDSLLKEIDNEMEQTKSNITQNGSEDTPHN and NTRSNATENSRGRSPSKMST. Serine 10 carries the phosphoserine modification. 2 stretches are compositionally biased toward polar residues: residues 22 to 32 and 59 to 76; these read TKSNITQNGSE and RSNATENSRGRSPSKMST. A phosphoserine mark is found at serine 78, serine 81, serine 91, serine 96, and serine 167. The interval 272–316 is disordered; it reads NLPSKLLNTSNNSHSDSRSPTASVEDLNISTNLPGADSSQNNPVT. Positions 277-316 are enriched in polar residues; that stretch reads LLNTSNNSHSDSRSPTASVEDLNISTNLPGADSSQNNPVT. Threonine 365 bears the Phosphothreonine mark. Serine 367 bears the Phosphoserine mark. Positions 444–588 are disordered; that stretch reads HQESEHANEQ…VEENEESEHV (145 aa). Positions 475 to 494 are enriched in basic and acidic residues; the sequence is EFQRNSKDGEEYRIVQHEES. Residues 497–509 are compositionally biased toward polar residues; sequence GQRTKSSEENIIN. Serine 511 is modified (phosphoserine). The span at 538-548 shows a compositional bias: polar residues; that stretch reads SSSCEDQSVSE. Residues 549–580 are compositionally biased toward basic and acidic residues; that stretch reads ARNKDSIEEKEVETKDENIETEKDESEYHKVE. Position 616 is a phosphoserine (serine 616). Residues 649 to 664 are compositionally biased toward polar residues; it reads NSQFSQQSSITTASTV. The interval 649 to 672 is disordered; that stretch reads NSQFSQQSSITTASTVDSKKDNGS. Residues 768–879 are interaction with IQG1; the sequence is EHENIPLSTH…SLWESSYELK (112 aa). Residues serine 805 and serine 811 each carry the phosphoserine modification. The PH domain maps to 1302–1413; the sequence is NIYKEGYLLQ…WYNKLQEVVE (112 aa).

The protein belongs to the BUD4 family. Interacts with AXL1, IQG1 and SEC3. Post-translationally, phosphorylated by CDC28.

The protein resides in the bud neck. In terms of biological role, required for establishment of the axial budding pattern in haploid cells. Cooperates with other bud site selection proteins to recognize a spatial landmark during mitosis and they subsequently become a landmark for downstream polarity establishment factors that coordinate axial budding and cytokinesis. Involved in the septin organization at the bud neck. In Saccharomyces cerevisiae (strain YJM789) (Baker's yeast), this protein is Bud site selection protein 4 (BUD4).